The sequence spans 524 residues: Probable cytochrome P450 519C1 (524 aa).

The chain crosses the membrane as a helical span at residues 1 to 21; that stretch reads MNILLLIFYFLVCFLIFDFIK. Cysteine 470 provides a ligand contact to heme.

This sequence belongs to the cytochrome P450 family. It depends on heme as a cofactor.

It is found in the membrane. This chain is Probable cytochrome P450 519C1 (cyp519C1), found in Dictyostelium discoideum (Social amoeba).